Consider the following 408-residue polypeptide: Aminoacylase-1 (408 aa).

A Zn(2+)-binding site is contributed by H80. Residue D82 is part of the active site. D113 provides a ligand contact to Zn(2+). E147 functions as the Proton acceptor in the catalytic mechanism. The Zn(2+) site is built by E148, E175, and H373.

This sequence belongs to the peptidase M20A family. As to quaternary structure, homodimer. Interacts with SPHK1. It depends on Zn(2+) as a cofactor.

Its subcellular location is the cytoplasm. The enzyme catalyses an N-acyl-L-amino acid + H2O = an L-alpha-amino acid + a carboxylate. It catalyses the reaction N-acetyl-L-methionine + H2O = L-methionine + acetate. The catalysed reaction is N-acetyl-L-glutamine + H2O = L-glutamine + acetate. In terms of biological role, catalyzes the hydrolysis of N-acetylated amino acids to acetate and free amino acids. The chain is Aminoacylase-1 (Acy1) from Mus musculus (Mouse).